The primary structure comprises 297 residues: Tyrosine recombinase XerD (297 aa).

The 85-residue stretch at 2-86 folds into the Core-binding (CB) domain; it reads KKLDPIIEQF…CLRKFFRFLC (85 aa). Residues 107 to 291 enclose the Tyr recombinase domain; it reads QLPKSLSEEQ…AKTRLKSIHK (185 aa). Residues R147, K171, H243, R246, and H269 contribute to the active site. The active-site O-(3'-phospho-DNA)-tyrosine intermediate is Y278.

Belongs to the 'phage' integrase family. XerD subfamily. Forms a cyclic heterotetrameric complex composed of two molecules of XerC and two molecules of XerD.

The protein localises to the cytoplasm. Functionally, site-specific tyrosine recombinase, which acts by catalyzing the cutting and rejoining of the recombining DNA molecules. The XerC-XerD complex is essential to convert dimers of the bacterial chromosome into monomers to permit their segregation at cell division. It also contributes to the segregational stability of plasmids. This Haemophilus ducreyi (strain 35000HP / ATCC 700724) protein is Tyrosine recombinase XerD.